Here is a 265-residue protein sequence, read N- to C-terminus: Ni-sirohydrochlorin a,c-diamide reductive cyclase complex, component CfbC (265 aa).

Belongs to the NifH/BchL/ChlL family. In terms of assembly, homodimer. The Ni-sirohydrochlorin a,c-diamide reductive cyclase complex is composed of a NifH homolog component CfbC and a NifD homolog component CfbD. The cofactor is [4Fe-4S] cluster.

The catalysed reaction is Ni-sirohydrochlorin a,c-diamide + 3 AH2 + ATP + H2O = 15,17(3)-seco-F430-17(3)-acid + 3 A + ADP + phosphate. Functionally, involved in the biosynthesis of the unique nickel-containing tetrapyrrole coenzyme F430, the prosthetic group of methyl-coenzyme M reductase (MCR), which plays a key role in methanogenesis and anaerobic methane oxidation. Catalyzes both the six-electron reduction of the tetrahydroporphyrin ring system and the gamma-lactamization of the c-acetamide side chain of Ni-sirohydrochlorin a,c-diamide to yield 15,17(3)-seco-F430-17(3)-acid (seco-F430), the last intermediate in the biosynthesis of the coenzyme F430. The protein is Ni-sirohydrochlorin a,c-diamide reductive cyclase complex, component CfbC of Methanosarcina barkeri (strain Fusaro / DSM 804).